We begin with the raw amino-acid sequence, 159 residues long: MAKTPKKDKTEEKEEHEESGGNKEDRERAYEVLATRVNPIASPLAARKLTKRLYKTVKKASKEKNIRKGIRDVQKFIKKGERGIVLIAGDTTPIEVYCHLPVVCEDAKIPYCYVPAKQDLGEAAGSKRPTCCVLLKPNESYQSSYDECLTDVTTLPRPI.

Residues 1–28 form a disordered region; sequence MAKTPKKDKTEEKEEHEESGGNKEDRER.

The protein belongs to the eukaryotic ribosomal protein eL8 family. As to quaternary structure, component of the small nucleolar ribonucleoprotein particle containing H/ACA-type snoRNAs (H/ACA snoRNPs). Component of the telomerase holoenzyme complex.

Its subcellular location is the nucleus. It localises to the nucleolus. Its function is as follows. Required for ribosome biogenesis. Part of a complex which catalyzes pseudouridylation of rRNA. This involves the isomerization of uridine such that the ribose is subsequently attached to C5, instead of the normal N1. Pseudouridine ('psi') residues may serve to stabilize the conformation of rRNAs. The polypeptide is H/ACA ribonucleoprotein complex subunit 2-like protein (Branchiostoma belcheri (Amphioxus)).